Reading from the N-terminus, the 215-residue chain is Octanoyltransferase (215 aa).

One can recognise a BPL/LPL catalytic domain in the interval 31-206 (PESQDEVWLV…QLVRHLDYAE (176 aa)). Substrate is bound by residues 70 to 77 (RGGQVTYH), 137 to 139 (SLG), and 150 to 152 (GLA). The active-site Acyl-thioester intermediate is the C168.

The protein belongs to the LipB family.

It is found in the cytoplasm. The catalysed reaction is octanoyl-[ACP] + L-lysyl-[protein] = N(6)-octanoyl-L-lysyl-[protein] + holo-[ACP] + H(+). The protein operates within protein modification; protein lipoylation via endogenous pathway; protein N(6)-(lipoyl)lysine from octanoyl-[acyl-carrier-protein]: step 1/2. Its function is as follows. Catalyzes the transfer of endogenously produced octanoic acid from octanoyl-acyl-carrier-protein onto the lipoyl domains of lipoate-dependent enzymes. Lipoyl-ACP can also act as a substrate although octanoyl-ACP is likely to be the physiological substrate. The polypeptide is Octanoyltransferase (Pseudomonas entomophila (strain L48)).